A 475-amino-acid polypeptide reads, in one-letter code: 3-isopropylmalate dehydratase large subunit (475 aa).

[4Fe-4S] cluster is bound by residues Cys353, Cys414, and Cys417.

It belongs to the aconitase/IPM isomerase family. LeuC type 1 subfamily. As to quaternary structure, heterodimer of LeuC and LeuD. [4Fe-4S] cluster is required as a cofactor.

It carries out the reaction (2R,3S)-3-isopropylmalate = (2S)-2-isopropylmalate. The protein operates within amino-acid biosynthesis; L-leucine biosynthesis; L-leucine from 3-methyl-2-oxobutanoate: step 2/4. Its function is as follows. Catalyzes the isomerization between 2-isopropylmalate and 3-isopropylmalate, via the formation of 2-isopropylmaleate. The protein is 3-isopropylmalate dehydratase large subunit of Stutzerimonas stutzeri (strain A1501) (Pseudomonas stutzeri).